We begin with the raw amino-acid sequence, 423 residues long: Sorting nexin-4 (423 aa).

Residues 1–21 (MTDKGKNDLTSKAKDKARGNP) are compositionally biased toward basic and acidic residues. Positions 1–25 (MTDKGKNDLTSKAKDKARGNPEKPP) are disordered. The PX domain maps to 29 to 157 (EIIVSDPQKR…TFLVSKDWES (129 aa)). Positions 78, 80, 104, and 123 each coordinate a 1,2-diacyl-sn-glycero-3-phospho-(1D-myo-inositol-3-phosphate). Coiled-coil stretches lie at residues 217–252 (KKND…AKLK) and 346–381 (SRRE…ECLK).

Belongs to the sorting nexin family. Forms a complex with ATG20 and ATG17. Binds also to SNC1 and SNX41.

Its subcellular location is the cytoplasm. The protein localises to the cytosol. It is found in the preautophagosomal structure membrane. The protein resides in the endosome membrane. Functionally, sorting nexin, involved in the separation or division of vacuoles throughout the entire life cycle of the cells. Involved in retrieval of late-Golgi SNAREs from post-Golgi endosomes to the trans-Golgi network, for cytoplasm to vacuole transport (Cvt), and autophagy of large cargos including mitophagy, pexophagy and glycophagy. Involved in proper sorting of the v-SNARE protein SNC1. The protein is Sorting nexin-4 of Saccharomyces cerevisiae (strain ATCC 204508 / S288c) (Baker's yeast).